The following is a 690-amino-acid chain: Long-chain fatty acid transport protein 5 (690 aa).

Topologically, residues 1–30 are cytoplasmic; the sequence is MGVRQQLALLLLLLLLLWGLGQPVWPVAVA. Helical transmembrane passes span 31–51 and 56–76; these read LTLR…LAML and LGPW…LTLL. Residues 77–690 are Cytoplasmic-facing; that stretch reads PARLPPGLRW…QAVCEGTWRL (614 aa). 292–303 is a binding site for AMP; it reads FIYTSGTTGLPK. Residue Ser-501 is modified to Phosphoserine.

Belongs to the ATP-dependent AMP-binding enzyme family. As to expression, predominantly expressed in liver.

The protein resides in the endoplasmic reticulum membrane. It is found in the microsome. It localises to the cell membrane. It catalyses the reaction a fatty acid(in) = a fatty acid(out). The catalysed reaction is cholate + ATP + CoA = choloyl-CoA + AMP + diphosphate. It carries out the reaction chenodeoxycholate + ATP + CoA = chenodeoxycholoyl-CoA + AMP + diphosphate. The enzyme catalyses deoxycholate + ATP + CoA = deoxycholoyl-CoA + AMP + diphosphate. It catalyses the reaction lithocholate + ATP + CoA = lithocholoyl-CoA + AMP + diphosphate. The catalysed reaction is (25R)-3alpha,7alpha,12alpha-trihydroxy-5beta-cholestan-26-oate + ATP + CoA = (25R)-3alpha,7alpha,12alpha-trihydroxy-5beta-cholestan-26-oyl-CoA + AMP + diphosphate. It carries out the reaction a very long-chain fatty acid + ATP + CoA = a very long-chain fatty acyl-CoA + AMP + diphosphate. The enzyme catalyses tetracosanoate + ATP + CoA = tetracosanoyl-CoA + AMP + diphosphate. It catalyses the reaction hexacosanoate + ATP + CoA = hexacosanoyl-CoA + AMP + diphosphate. The catalysed reaction is a long-chain fatty acid + ATP + CoA = a long-chain fatty acyl-CoA + AMP + diphosphate. It carries out the reaction octadecanoate + ATP + CoA = octadecanoyl-CoA + AMP + diphosphate. The enzyme catalyses eicosanoate + ATP + CoA = eicosanoyl-CoA + AMP + diphosphate. 3-alpha,7-alpha,12-alpha-trihydroxy-5-beta-cholestanate (THCA) inhibits the activation of cholate. Its function is as follows. May mediate the import of long-chain fatty acids (LCFA) by facilitating their transport across cell membranes. Also catalyzes the ATP-dependent formation of fatty acyl-CoA using LCFA and very-long-chain fatty acids (VLCFA) as substrates. Mainly functions as a bile acyl-CoA synthetase catalyzing the activation of bile acids via ATP-dependent formation of bile acid CoA thioesters which is necessary for their subsequent conjugation with glycine or taurine. Both primary bile acids (cholic acid and chenodeoxycholic acid) and secondary bile acids (deoxycholic acid and lithocholic acid) are the principal substrates. In vitro, activates 3-alpha,7-alpha,12-alpha-trihydroxy-5-beta-cholestanate ((25R)-3alpha,7alpha,12alpha-trihydroxy-5beta-cholestan-26-oate or THCA), the C27 precursor of cholic acid deriving from the de novo synthesis from cholesterol. Plays an important role in hepatic fatty acid uptake and bile acid reconjugation and recycling but not in de novo synthesis of bile acids. This is Long-chain fatty acid transport protein 5 (SLC27A5) from Homo sapiens (Human).